Consider the following 123-residue polypeptide: Methicillin resistance regulatory protein MecI (123 aa).

The H-T-H motif DNA-binding region spans 7–71 (EISSAEWEVM…KDNKIFQYYS (65 aa)). An important for dimerization region spans residues 74–123 (EESDIKYKTSKNFINKVYKGGFNSLVLNFVEKEDLSQDEIEELRNILNKK).

This sequence belongs to the BlaI transcriptional regulatory family. As to quaternary structure, monomer and homodimer. Post-translationally, upon exposure to beta-lactams, proteolytic cleavage at a single site impairs dimerization and abolishes repressor activity.

The protein resides in the cytoplasm. Transcriptional repressor that constitutively blocks the transcription of the gene for the penicillin-binding protein MecA. Binds DNA as a dimer. In Mammaliicoccus sciuri (Staphylococcus sciuri), this protein is Methicillin resistance regulatory protein MecI (mecI).